Consider the following 134-residue polypeptide: Large ribosomal subunit protein eL32 (134 aa).

This sequence belongs to the eukaryotic ribosomal protein eL32 family.

The polypeptide is Large ribosomal subunit protein eL32 (RpL32) (Spodoptera frugiperda (Fall armyworm)).